The sequence spans 80 residues: Large ribosomal subunit protein bL31B (80 aa).

The protein belongs to the bacterial ribosomal protein bL31 family. Type B subfamily. As to quaternary structure, part of the 50S ribosomal subunit.

This is Large ribosomal subunit protein bL31B from Xylella fastidiosa (strain 9a5c).